Reading from the N-terminus, the 468-residue chain is GTPase Der (468 aa).

2 EngA-type G domains span residues P3 to D169 and I199 to T372. GTP contacts are provided by residues G9 to S16, D56 to F60, N119 to E122, G205 to S212, D252 to L256, and N317 to D320. The KH-like domain occupies C373–H457.

Belongs to the TRAFAC class TrmE-Era-EngA-EngB-Septin-like GTPase superfamily. EngA (Der) GTPase family. As to quaternary structure, associates with the 50S ribosomal subunit.

Functionally, GTPase that plays an essential role in the late steps of ribosome biogenesis. This Verminephrobacter eiseniae (strain EF01-2) protein is GTPase Der.